A 105-amino-acid chain; its full sequence is Small ribosomal subunit protein uS14m (105 aa).

The protein belongs to the universal ribosomal protein uS14 family. As to quaternary structure, component of the mitochondrial small ribosomal subunit (mt-SSU). Mature yeast 74S mitochondrial ribosomes consist of a small (37S) and a large (54S) subunit. The 37S small subunit contains a 15S ribosomal RNA (15S mt-rRNA) and at least 32 different proteins. The 54S large subunit contains a 21S rRNA (21S mt-rRNA) and at least 45 different proteins.

It localises to the mitochondrion. Component of the mitochondrial ribosome (mitoribosome), a dedicated translation machinery responsible for the synthesis of mitochondrial genome-encoded proteins, including at least some of the essential transmembrane subunits of the mitochondrial respiratory chain. The mitoribosomes are attached to the mitochondrial inner membrane and translation products are cotranslationally integrated into the membrane. In Schizosaccharomyces pombe (strain 972 / ATCC 24843) (Fission yeast), this protein is Small ribosomal subunit protein uS14m (mrp2).